We begin with the raw amino-acid sequence, 272 residues long: Protein STAY-GREEN 1, chloroplastic (272 aa).

The N-terminal 50 residues, 1 to 50 (MGTLTTSLVVPSKLNNEQQSSIFIHKTRRKCKKNQSIVPVARLFGPAIFE), are a transit peptide targeting the chloroplast. The disordered stretch occupies residues 201 to 222 (TSPSSSSGGVGGVKSTSFTSNS).

The protein belongs to the staygreen family. As to quaternary structure, interacts with PSY1.

Its subcellular location is the plastid. It is found in the chloroplast. Required to trigger chlorophyll degradation during leaf senescence and fruit ripening. Binds directly PSY1 to regulate the accumulation of lycopene and beta-carotene in the maturing fruits. The protein is Protein STAY-GREEN 1, chloroplastic of Solanum lycopersicum (Tomato).